A 233-amino-acid polypeptide reads, in one-letter code: 7-cyano-7-deazaguanine synthase (233 aa).

7 to 17 (LSGGLDSAVTS) is a binding site for ATP. Zn(2+)-binding residues include cysteine 195, cysteine 206, cysteine 209, and cysteine 212.

Belongs to the QueC family. The cofactor is Zn(2+).

It carries out the reaction 7-carboxy-7-deazaguanine + NH4(+) + ATP = 7-cyano-7-deazaguanine + ADP + phosphate + H2O + H(+). It functions in the pathway purine metabolism; 7-cyano-7-deazaguanine biosynthesis. Catalyzes the ATP-dependent conversion of 7-carboxy-7-deazaguanine (CDG) to 7-cyano-7-deazaguanine (preQ(0)). The protein is 7-cyano-7-deazaguanine synthase of Methanococcus maripaludis (strain C5 / ATCC BAA-1333).